Here is a 24-residue protein sequence, read N- to C-terminus: Acidic phospholipase A2 4 (24 aa).

Belongs to the phospholipase A2 family. Group II subfamily. The cofactor is Ca(2+). Expressed by the venom gland.

The protein resides in the secreted. The catalysed reaction is a 1,2-diacyl-sn-glycero-3-phosphocholine + H2O = a 1-acyl-sn-glycero-3-phosphocholine + a fatty acid + H(+). In terms of biological role, PLA2 catalyzes the calcium-dependent hydrolysis of the 2-acyl groups in 3-sn-phosphoglycerides. The protein is Acidic phospholipase A2 4 of Trimeresurus stejnegeri (Chinese green tree viper).